Here is a 346-residue protein sequence, read N- to C-terminus: Large ribosomal subunit protein uL3 (346 aa).

The segment at 324-346 is disordered; sequence KPPKKKPPVERPQITYVSRESKQ.

The protein belongs to the universal ribosomal protein uL3 family. Part of the 50S ribosomal subunit. Forms a cluster with proteins L14 and L24e.

Its function is as follows. One of the primary rRNA binding proteins, it binds directly near the 3'-end of the 23S rRNA, where it nucleates assembly of the 50S subunit. The chain is Large ribosomal subunit protein uL3 from Thermococcus gammatolerans (strain DSM 15229 / JCM 11827 / EJ3).